The following is an 801-amino-acid chain: MPEPILHSKFLSGLPAGRKNGVRHGEKPEKVGEKQFDFTRKIRELRLELEIKKREEERIEKDIAIILEENTIDGGEQNRSFGLAVTRLNNHMLVVENSAKQLTSALKNISVLADTISGRVSALDVAKTRVVGCLQLAGDMRDLGVCAEGIDDAIRSEDFETASQHIHRFLTLDQAVFQIREFKQKDATDSIRHSYEVLSSAKERLSKILKSRLTESVQKGDVAEMQRFIKMFPLIHEPDEGLQRYSVFLNQKIDKLAEDNLAIMKAGGTDDNRRNVLYADTLFMFFEGVAEIIESNLPVLEHSYGLEKLLDFMFILQARIDEFFRRLHEEFDTRRRLSHFNRLVDDVIHQKKAAEAVEDAPDPMEIDAIASEICMMNTSAEMYWRFVSRRIGKNEVIRSPSGDGDDEENEEARQERHRLRKEAKEQKMDQLLNRSRVGTKMQELIGNYCLLEHFYMLKSVQKAIKSDVKEDAGGLTSSIVDDVVFIIRKSIRRAAGSGNVDSVCATINNATALIDTVVHGHLRQSIQQGYVTSSNFASEAFTAYQQGKPVKEAADAQKEQFLLALNNSAKLSELLIELQKGLITEWAGVKRPDVEKNKLEHSTTQIEESAKKLASLAKHGVEELFKSAFKNKIKQGADPYQEIDRQMTMQDVEYYEAHDPFMEQFLAQIDRLLVENEPLLFADNYQTLLLLTSSEIARQIEQSLAKCQFNRYGALQLDREYRQICAYLTNVAGWSAREKVGRLGQIVSLLNVETIDEAMEVWHNSKAMTSSATIRTLTLPEVRKVLALRADFPTVAIKSIE.

A disordered region spans residues 397 to 427 (IRSPSGDGDDEENEEARQERHRLRKEAKEQK).

This sequence belongs to the COG4 family. Component of the conserved oligomeric Golgi complex which is composed of eight different subunits and is required for normal Golgi morphology and localization.

It is found in the golgi apparatus membrane. Required for normal Golgi function. In Caenorhabditis elegans, this protein is Conserved oligomeric Golgi complex subunit 4 (cogc-4).